We begin with the raw amino-acid sequence, 113 residues long: Nucleoid-associated protein Cthe_2143 (113 aa).

It belongs to the YbaB/EbfC family. Homodimer.

It is found in the cytoplasm. Its subcellular location is the nucleoid. Binds to DNA and alters its conformation. May be involved in regulation of gene expression, nucleoid organization and DNA protection. The polypeptide is Nucleoid-associated protein Cthe_2143 (Acetivibrio thermocellus (strain ATCC 27405 / DSM 1237 / JCM 9322 / NBRC 103400 / NCIMB 10682 / NRRL B-4536 / VPI 7372) (Clostridium thermocellum)).